The following is a 215-amino-acid chain: Thiamine-phosphate synthase (215 aa).

Residues 43-47 (QFRDK) and asparagine 78 each bind 4-amino-2-methyl-5-(diphosphooxymethyl)pyrimidine. Residues aspartate 79 and aspartate 98 each contribute to the Mg(2+) site. Serine 117 contacts 4-amino-2-methyl-5-(diphosphooxymethyl)pyrimidine. Residue 143-145 (TNS) participates in 2-[(2R,5Z)-2-carboxy-4-methylthiazol-5(2H)-ylidene]ethyl phosphate binding. Lysine 146 is a 4-amino-2-methyl-5-(diphosphooxymethyl)pyrimidine binding site. Residues glycine 174 and 194–195 (IS) contribute to the 2-[(2R,5Z)-2-carboxy-4-methylthiazol-5(2H)-ylidene]ethyl phosphate site.

This sequence belongs to the thiamine-phosphate synthase family. Mg(2+) serves as cofactor.

It carries out the reaction 2-[(2R,5Z)-2-carboxy-4-methylthiazol-5(2H)-ylidene]ethyl phosphate + 4-amino-2-methyl-5-(diphosphooxymethyl)pyrimidine + 2 H(+) = thiamine phosphate + CO2 + diphosphate. It catalyses the reaction 2-(2-carboxy-4-methylthiazol-5-yl)ethyl phosphate + 4-amino-2-methyl-5-(diphosphooxymethyl)pyrimidine + 2 H(+) = thiamine phosphate + CO2 + diphosphate. The catalysed reaction is 4-methyl-5-(2-phosphooxyethyl)-thiazole + 4-amino-2-methyl-5-(diphosphooxymethyl)pyrimidine + H(+) = thiamine phosphate + diphosphate. The protein operates within cofactor biosynthesis; thiamine diphosphate biosynthesis; thiamine phosphate from 4-amino-2-methyl-5-diphosphomethylpyrimidine and 4-methyl-5-(2-phosphoethyl)-thiazole: step 1/1. In terms of biological role, condenses 4-methyl-5-(beta-hydroxyethyl)thiazole monophosphate (THZ-P) and 2-methyl-4-amino-5-hydroxymethyl pyrimidine pyrophosphate (HMP-PP) to form thiamine monophosphate (TMP). This is Thiamine-phosphate synthase from Lactococcus lactis subsp. lactis (strain IL1403) (Streptococcus lactis).